A 127-amino-acid chain; its full sequence is Ribosome-binding factor A (127 aa).

The protein belongs to the RbfA family. Monomer. Binds 30S ribosomal subunits, but not 50S ribosomal subunits or 70S ribosomes.

The protein resides in the cytoplasm. Its function is as follows. One of several proteins that assist in the late maturation steps of the functional core of the 30S ribosomal subunit. Associates with free 30S ribosomal subunits (but not with 30S subunits that are part of 70S ribosomes or polysomes). Required for efficient processing of 16S rRNA. May interact with the 5'-terminal helix region of 16S rRNA. The chain is Ribosome-binding factor A from Geobacillus kaustophilus (strain HTA426).